The primary structure comprises 619 residues: Putative transcription activator BRLF1 homolog (619 aa).

2 disordered regions span residues 301 to 389 (LRDS…ETQS) and 563 to 603 (GLVS…SDEM). 2 stretches are compositionally biased toward low complexity: residues 371–389 (EAPQ…ETQS) and 567–582 (QQQA…GGPP). Over residues 589-598 (QEQQQSSTDP) the composition is skewed to polar residues.

Belongs to the herpesviridae TAF50 family.

Transcription activation. This chain is Putative transcription activator BRLF1 homolog (50), found in Connochaetes taurinus (Blue wildebeest).